We begin with the raw amino-acid sequence, 870 residues long: Ribonucleoside-diphosphate reductase large subunit (870 aa).

The 95-residue stretch at 16 to 110 (MYVVKRDGTK…VSNLHKQTSK (95 aa)) folds into the ATP-cone domain. ATP-binding positions include 20–21 (KR), 26–32 (ENVSFDK), Thr71, and Asp75. Position 235 (Ser235) interacts with GDP. A disulfide bond links Cys236 and Cys463. DTTP contacts are provided by residues 244–246 (DSI), Lys261, Arg274, and 281–282 (RG). Asn446 is a binding site for GDP. Asn446 acts as the Proton acceptor in catalysis. The Cysteine radical intermediate role is filled by Cys448. Residues Glu450 and 632 to 635 (TAST) contribute to the GDP site. Glu450 functions as the Proton acceptor in the catalytic mechanism. The tract at residues 789–854 (KPVENNINST…NNNEDDLANY (66 aa)) is disordered. A compositionally biased stretch (low complexity) spans 796-811 (NSTTPLKTPTKTPNSS). The span at 812–831 (NRISTSPTNNLTSPIRFNIT) shows a compositional bias: polar residues. Positions 832-844 (QQQQQQQQQQQQQ) are enriched in low complexity.

The protein belongs to the ribonucleoside diphosphate reductase large chain family. Heterodimer of a large and a small subunit.

The protein resides in the cytoplasm. The enzyme catalyses a 2'-deoxyribonucleoside 5'-diphosphate + [thioredoxin]-disulfide + H2O = a ribonucleoside 5'-diphosphate + [thioredoxin]-dithiol. With respect to regulation, under complex allosteric control mediated by deoxynucleoside triphosphates and ATP binding to separate specificity and activation sites on the large subunit. The type of nucleotide bound at the specificity site determines substrate preference. It seems probable that ATP makes the enzyme reduce CDP and UDP, dGTP favors ADP reduction and dTTP favors GDP reduction. Stimulated by ATP and inhibited by dATP binding to the activity site. Provides the precursors necessary for DNA synthesis. Catalyzes the biosynthesis of deoxyribonucleotides from the corresponding ribonucleotides. The sequence is that of Ribonucleoside-diphosphate reductase large subunit (rnrA) from Dictyostelium discoideum (Social amoeba).